Here is a 49-residue protein sequence, read N- to C-terminus: Small ribosomal subunit protein uS19c (49 aa).

It belongs to the universal ribosomal protein uS19 family.

The protein resides in the plastid. It localises to the chloroplast. In terms of biological role, protein S19 forms a complex with S13 that binds strongly to the 16S ribosomal RNA. This is Small ribosomal subunit protein uS19c (rps19) from Sinapis alba (White mustard).